We begin with the raw amino-acid sequence, 347 residues long: D-fructose 1,6-bisphosphatase class 2/sedoheptulose 1,7-bisphosphatase (347 aa).

Positions 33, 57, 97, and 100 each coordinate Mn(2+). Substrate is bound by residues 100-102 (EGT), Tyr-131, 176-178 (RKR), and 198-200 (DGD). Glu-225 serves as a coordination point for Mn(2+).

It belongs to the FBPase class 2 family. Homotetramer. Mn(2+) is required as a cofactor.

It carries out the reaction beta-D-fructose 1,6-bisphosphate + H2O = beta-D-fructose 6-phosphate + phosphate. The catalysed reaction is D-sedoheptulose 1,7-bisphosphate + H2O = D-sedoheptulose 7-phosphate + phosphate. It participates in carbohydrate biosynthesis; Calvin cycle. In terms of biological role, catalyzes the hydrolysis of fructose 1,6-bisphosphate (Fru 1,6-P2) and sedoheptulose 1,7-bisphosphate (Sed 1,7-P2) to fructose 6-phosphate and sedoheptulose 7-phosphate, respectively. The chain is D-fructose 1,6-bisphosphatase class 2/sedoheptulose 1,7-bisphosphatase from Synechococcus sp. (strain JA-2-3B'a(2-13)) (Cyanobacteria bacterium Yellowstone B-Prime).